Reading from the N-terminus, the 607-residue chain is Elongation factor 4 (607 aa).

Positions 11 to 193 constitute a tr-type G domain; it reads ENIRNFSIIA…KIVEVVPAPD (183 aa). GTP contacts are provided by residues 23–28 and 140–143; these read DHGKST and NKID.

The protein belongs to the TRAFAC class translation factor GTPase superfamily. Classic translation factor GTPase family. LepA subfamily.

The protein localises to the cell membrane. The catalysed reaction is GTP + H2O = GDP + phosphate + H(+). Its function is as follows. Required for accurate and efficient protein synthesis under certain stress conditions. May act as a fidelity factor of the translation reaction, by catalyzing a one-codon backward translocation of tRNAs on improperly translocated ribosomes. Back-translocation proceeds from a post-translocation (POST) complex to a pre-translocation (PRE) complex, thus giving elongation factor G a second chance to translocate the tRNAs correctly. Binds to ribosomes in a GTP-dependent manner. This chain is Elongation factor 4, found in Staphylococcus aureus (strain N315).